The chain runs to 273 residues: Signal recognition particle subunit SEC65 (273 aa).

Residues 25–71 (PSLRTPIAPKITPKVVRSQDQENPAFLPGTNNNSNSNNNSSNEKEQL) form a disordered region. Positions 55 to 65 (NNNSNSNNNSS) are enriched in low complexity.

Fungal signal recognition particle (SRP) complex consists of a 7S RNA molecule (scR1) and at least six protein subunits: SRP72, SRP68, SRP54, SEC65, SRP21 and SRP14.

The protein resides in the cytoplasm. Signal-recognition-particle (SRP) assembly has a crucial role in targeting secretory proteins to the rough endoplasmic reticulum (ER) membrane. SRP is required for the cotranslational protein translocation for ER import and preferentially recognizes strongly hydrophobic signal sequences. It is involved in targeting the nascent chain-ribosome (RNC) complex to the ER and is proposed to participate in the arrest of nascent chain elongation during membrane targeting. SEC65 is required for SRP integrity. This is Signal recognition particle subunit SEC65 (SEC65) from Saccharomyces cerevisiae (strain ATCC 204508 / S288c) (Baker's yeast).